The primary structure comprises 592 residues: Probable oxidoreductase EphD (592 aa).

Residues 30–286 (PTVVLVHGFP…KAGHFSPMSH (257 aa)) enclose the AB hydrolase-1 domain. Ser461 contacts substrate. The Proton acceptor role is filled by Tyr474.

It belongs to the short-chain dehydrogenases/reductases (SDR) family.

This Mycobacterium bovis (strain ATCC BAA-935 / AF2122/97) protein is Probable oxidoreductase EphD (ephD).